The primary structure comprises 428 residues: Acylglycerol kinase, mitochondrial (428 aa).

Residues 18 to 34 form a hydrophobic region; it reads STVGFCLLAYGSHWLYG. Positions 61–202 constitute a DAGKc domain; the sequence is SAIKKATVFL…LDVLQIKGEQ (142 aa).

Belongs to the AGK family. In terms of assembly, component of the TIM22 complex. Mg(2+) is required as a cofactor.

Its subcellular location is the mitochondrion inner membrane. It is found in the mitochondrion intermembrane space. It carries out the reaction a monoacylglycerol + ATP = a monoacyl-sn-glycero-3-phosphate + ADP + H(+). The enzyme catalyses a 1,2-diacyl-sn-glycerol + ATP = a 1,2-diacyl-sn-glycero-3-phosphate + ADP + H(+). It catalyses the reaction an N-acylsphing-4-enine + ATP = an N-acylsphing-4-enine 1-phosphate + ADP + H(+). The catalysed reaction is 1-(9Z-octadecenoyl)-sn-glycerol + ATP = 1-(9Z-octadecenoyl)-sn-glycero-3-phosphate + ADP + H(+). It carries out the reaction 1,2-di-(9Z-octadecenoyl)-sn-glycerol + ATP = 1,2-di-(9Z-octadecenoyl)-sn-glycero-3-phosphate + ADP + H(+). The enzyme catalyses a 1-acyl-sn-glycerol + ATP = a 1-acyl-sn-glycero-3-phosphate + ADP + H(+). It catalyses the reaction 1-hexadecanoyl-sn-glycerol + ATP = 1-hexadecanoyl-sn-glycero-3-phosphate + ADP + H(+). The catalysed reaction is a 2-acylglycerol + ATP = a 2-acyl-sn-glycerol 3-phosphate + ADP + H(+). It carries out the reaction 2-(5Z,8Z,11Z,14Z-eicosatetraenoyl)-glycerol + ATP = 2-(5Z,8Z,11Z,14Z-eicosatetraenoyl)-sn-glycero-3-phosphate + ADP + H(+). The enzyme catalyses 1-(5Z,8Z,11Z,14Z-eicosatetraenoyl)-sn-glycerol + ATP = 1-(5Z,8Z,11Z,14Z-eicosatetraenoyl)-sn-glycero-3-phosphate + ADP + H(+). It catalyses the reaction N-(hexanoyl)sphing-4-enine + ATP = N-hexanoylsphing-4-enine 1-phosphate + ADP + H(+). The protein operates within lipid metabolism; glycerolipid metabolism. In terms of biological role, lipid kinase that can phosphorylate both monoacylglycerol and diacylglycerol to form lysophosphatidic acid (LPA) and phosphatidic acid (PA), respectively. Phosphorylates ceramide but not sphingosine. Phosphorylates 1,2-dioleoylglycerol more rapidly than 2,3-dioleoylglycerol. Independently of its lipid kinase activity, acts as a component of the TIM22 complex. The TIM22 complex mediates the import and insertion of multi-pass transmembrane proteins into the mitochondrial inner membrane by forming a twin-pore translocase that uses the membrane potential as the external driving force. The chain is Acylglycerol kinase, mitochondrial from Xenopus laevis (African clawed frog).